Reading from the N-terminus, the 207-residue chain is Outer-membrane lipoprotein LolB (207 aa).

The N-terminal stretch at 1–21 (MPLPDFRLIRLLPLAALVLTA) is a signal peptide. Cys22 carries the N-palmitoyl cysteine lipid modification. The S-diacylglycerol cysteine moiety is linked to residue Cys22.

This sequence belongs to the LolB family. As to quaternary structure, monomer.

It is found in the cell outer membrane. In terms of biological role, plays a critical role in the incorporation of lipoproteins in the outer membrane after they are released by the LolA protein. This chain is Outer-membrane lipoprotein LolB, found in Escherichia coli (strain K12 / MC4100 / BW2952).